We begin with the raw amino-acid sequence, 990 residues long: Nucleotide-binding leucine-rich repeat (NLR)-like protein (990 aa).

Positions 22 to 304 (GWICAIPTEL…AVAAAYAKIL (283 aa)) are purine nucleoside phosphorylase domain. Residues 334 to 563 (REEHLRQVLT…TISNYLEVYE (230 aa)) enclose the NB-ARC domain. TPR repeat units follow at residues 732-765 (RDLL…KKLA), 774-807 (IGSM…MKQV), 816-849 (LGSM…RKQA), 858-891 (LMSM…KQQT), 900-933 (LASM…RKQV), and 942-975 (LQSM…ATLD). The interval 965–990 (QQQQQSQATLDEGRLSKPARKRRKKK) is disordered. A compositionally biased stretch (basic residues) spans 981-990 (KPARKRRKKK).

The catalysed reaction is ATP + H2O = D-ribose 5-triphosphate + adenine. The enzyme catalyses dATP + H2O = 2-deoxyribose 5-triphosphate + adenine. The N-terminal purine nucleoside phosphorylase (PNP) domain cleaves the N-glycosidic bond of ATP, and to a lesser extent dATP; has very weak activity on adenosine and deoxyadenosine and no activity on (d)ADP or (d)AMP. The chain is Nucleotide-binding leucine-rich repeat (NLR)-like protein from Hyaloscypha variabilis (strain UAMH 11265 / GT02V1 / F) (Meliniomyces variabilis).